The chain runs to 166 residues: Small ribosomal subunit protein uS5 (166 aa).

An S5 DRBM domain is found at 11-74 (LQEKLIAVNR…EKARRNMKTV (64 aa)).

This sequence belongs to the universal ribosomal protein uS5 family. As to quaternary structure, part of the 30S ribosomal subunit. Contacts proteins S4 and S8.

With S4 and S12 plays an important role in translational accuracy. Its function is as follows. Located at the back of the 30S subunit body where it stabilizes the conformation of the head with respect to the body. The polypeptide is Small ribosomal subunit protein uS5 (Photorhabdus laumondii subsp. laumondii (strain DSM 15139 / CIP 105565 / TT01) (Photorhabdus luminescens subsp. laumondii)).